Consider the following 100-residue polypeptide: NADH-quinone oxidoreductase subunit K (100 aa).

3 consecutive transmembrane segments (helical) span residues 4-24, 28-48, and 60-80; these read LFHG…SLIV, ILFM…ALVV, and IMYI…LALL.

The protein belongs to the complex I subunit 4L family. As to quaternary structure, NDH-1 is composed of 13 different subunits. Subunits NuoA, H, J, K, L, M, N constitute the membrane sector of the complex.

The protein localises to the cell membrane. It carries out the reaction a quinone + NADH + 5 H(+)(in) = a quinol + NAD(+) + 4 H(+)(out). Its function is as follows. NDH-1 shuttles electrons from NADH, via FMN and iron-sulfur (Fe-S) centers, to quinones in the respiratory chain. The immediate electron acceptor for the enzyme in this species is believed to be ubiquinone. Couples the redox reaction to proton translocation (for every two electrons transferred, four hydrogen ions are translocated across the cytoplasmic membrane), and thus conserves the redox energy in a proton gradient. This is NADH-quinone oxidoreductase subunit K from Buchnera aphidicola subsp. Schizaphis graminum (strain Sg).